The following is a 613-amino-acid chain: MAEGVFQGAIGIDLGTTYSCVATYESSVEIIANEQGNRVTPSFVAFTPEERLIGDAAKNQAALNPRNTVFDAKRLIGRRFDDESVQKDMKTWPFKVIDVDGNPVIEVQYLEETKTFSPQEISAMVLTKMKEIAEAKIGKKVEKAVITVPAYFNDAQRQATKDAGAISGLNVLRIINEPTAAAIAYGLGAGKSEKERHVLIFDLGGGTFDVSLLHIAGGVYTVKSTSGNTHLGGQDFDTNLLEHFKAEFKKKTGLDISDDARALRRLRTAAERAKRTLSSVTQTTVEVDSLFDGEDFESSLTRARFEDLNAALFKSTLEPVEQVLKDAKISKSQIDEVVLVGGSTRIPKVQKLLSDFFDGKQLEKSINPDEAVAYGAAVQGAILTGQSTSDETKDLLLLDVAPLSLGVGMQGDMFGIVVPRNTTVPTIKRRTFTTCADNQTTVQFPVYQGERVNCKENTLLGEFDLKNIPMMPAGEPVLEAIFEVDANGILKVTAVEKSTGKSSNITISNAVGRLSSEEIEKMVNQAEEFKAADEAFAKKHEARQRLESYVASIEQTVTDPVLSSKLKRGSKSKIEAALSDALAALQIEDPSADELRKAEVGLKRVVTKAMSSR.

An N-acetylalanine modification is found at alanine 2. Positions 2–391 (AEGVFQGAIG…ILTGQSTSDE (390 aa)) are nucleotide binding domain (NBD). 16 to 18 (TTY) is an ATP binding site. Threonine 47 carries the phosphothreonine modification. ATP is bound by residues lysine 73, 205-207 (GGT), 271-278 (ERAKRTLS), and glycine 342. The inter-domain linker stretch occupies residues 392 to 402 (TKDLLLLDVAP). The segment at 403–613 (LSLGVGMQGD…RVVTKAMSSR (211 aa)) is substrate binding domain (SBD). The Contributes to ribosome binding signature appears at 428–430 (KRR). A Phosphothreonine modification is found at threonine 431. The segment at 516 to 612 (SEEIEKMVNQ…KRVVTKAMSS (97 aa)) is lid domain (SBDalpha). A Nuclear export signal motif is present at residues 574–582 (IEAALSDAL). The interval 601-613 (GLKRVVTKAMSSR) is required for interaction with ribosomes.

It belongs to the heat shock protein 70 family. Ssb-type Hsp70 subfamily. As to quaternary structure, binds to ribosomes. Binds close to the ribosomal tunnel exit via contacts with both ribosomal proteins RPL35, RPL39 and RPL19, and rRNA. Directly interacts with nascent polypeptides. This interaction is dependent on the ribosome-associated complex (RAC). Interacts with SSE1. Interacts with FES1. Interacts with NAP1.

The protein resides in the cytoplasm. It catalyses the reaction ATP + H2O = ADP + phosphate + H(+). Ribosome-bound, Hsp70-type chaperone that assists in the cotranslational folding of newly synthesized proteins in the cytosol. Stimulates folding by interacting with nascent chains, binding to short, largely hydrophobic sequences exposed by unfolded proteins, thereby stabilizing longer, more slowly translated, and aggregation-prone nascent polypeptides and domains that cannot fold stably until fully synthesized. The Hsp70-protein substrate interaction depends on ATP-binding and on allosteric regulation between the NBD and the SBD. The ATP-bound state is characterized by a fast exchange rate of substrate (low affinity state), while in the ADP-bound state exchange is much slower (high affinity state). During the Hsp70 cycle, the chaperone switches between the ATP-bound state (open conformation) and the ADP-bound state (closed conformation) by major conformational rearrangements involving mainly the lid domain. Ssb cooperates with a specific Hsp40/Hsp70 co-chaperone termed the ribosome-associated complex (RAC), which stimulates the ATPase activity of the ribosome-associated pool of Ssbs and switches it to the high affinity substrate binding state. Hsp110 chaperone SSE1 and FES1 act as nucleotide exchange factors that cause substrate release. The sequence is that of Ribosome-associated molecular chaperone SSB1 from Saccharomyces cerevisiae (strain ATCC 204508 / S288c) (Baker's yeast).